Consider the following 420-residue polypeptide: Gamma-glutamyl phosphate reductase (420 aa).

This sequence belongs to the gamma-glutamyl phosphate reductase family.

The protein resides in the cytoplasm. The enzyme catalyses L-glutamate 5-semialdehyde + phosphate + NADP(+) = L-glutamyl 5-phosphate + NADPH + H(+). It participates in amino-acid biosynthesis; L-proline biosynthesis; L-glutamate 5-semialdehyde from L-glutamate: step 2/2. Functionally, catalyzes the NADPH-dependent reduction of L-glutamate 5-phosphate into L-glutamate 5-semialdehyde and phosphate. The product spontaneously undergoes cyclization to form 1-pyrroline-5-carboxylate. In Alkalilimnicola ehrlichii (strain ATCC BAA-1101 / DSM 17681 / MLHE-1), this protein is Gamma-glutamyl phosphate reductase.